The primary structure comprises 66 residues: Phylloseptin-H9 (66 aa).

Residues 1–22 (MAFLKKSLFLVLFLGLVSLSIC) form the signal peptide. A propeptide spanning residues 23–44 (EEEKRETEEEENDQEEDDKSEE) is cleaved from the precursor. The segment at 24 to 44 (EEKRETEEEENDQEEDDKSEE) is disordered. Residues 30–41 (EEEENDQEEDDK) show a composition bias toward acidic residues. Residue L65 is modified to Leucine amide.

Expressed by the skin glands.

Its subcellular location is the secreted. In terms of biological role, has antimicrobial activity. In Pithecopus hypochondrialis (Orange-legged leaf frog), this protein is Phylloseptin-H9.